The primary structure comprises 1189 residues: Pesticidal crystal protein Cry1Ca (1189 aa).

This sequence belongs to the delta endotoxin family.

Functionally, promotes colloidosmotic lysis by binding to the midgut epithelial cells of many lepidopteran larvae including Spodoptera species. In Bacillus thuringiensis subsp. entomocidus, this protein is Pesticidal crystal protein Cry1Ca (cry1Ca).